A 160-amino-acid chain; its full sequence is Small ribosomal subunit protein bS6 (160 aa).

This sequence belongs to the bacterial ribosomal protein bS6 family.

Its function is as follows. Binds together with bS18 to 16S ribosomal RNA. This chain is Small ribosomal subunit protein bS6, found in Ureaplasma urealyticum serovar 10 (strain ATCC 33699 / Western).